The sequence spans 301 residues: Probable alpha-L-glutamate ligase 1 (301 aa).

Residues 104–287 (MQLMSRRGIG…VAGAIIAFIE (184 aa)) form the ATP-grasp domain. Residues Lys141, 178–179 (EY), Asp187, and 211–213 (RSN) each bind ATP. Residues Asp248, Glu260, and Asn262 each coordinate Mg(2+). 3 residues coordinate Mn(2+): Asp248, Glu260, and Asn262.

The protein belongs to the RimK family. It depends on Mg(2+) as a cofactor. Mn(2+) serves as cofactor.

The polypeptide is Probable alpha-L-glutamate ligase 1 (Shewanella amazonensis (strain ATCC BAA-1098 / SB2B)).